A 148-amino-acid chain; its full sequence is Deoxyuridine 5'-triphosphate nucleotidohydrolase (148 aa).

Residues 68–70 (RSG), asparagine 81, 85–87 (TID), and lysine 95 contribute to the substrate site.

It belongs to the dUTPase family. It depends on Mg(2+) as a cofactor.

It carries out the reaction dUTP + H2O = dUMP + diphosphate + H(+). The protein operates within pyrimidine metabolism; dUMP biosynthesis; dUMP from dCTP (dUTP route): step 2/2. Functionally, this enzyme is involved in nucleotide metabolism: it produces dUMP, the immediate precursor of thymidine nucleotides and it decreases the intracellular concentration of dUTP so that uracil cannot be incorporated into DNA. The protein is Deoxyuridine 5'-triphosphate nucleotidohydrolase of Rickettsia canadensis (strain McKiel).